We begin with the raw amino-acid sequence, 87 residues long: Small ribosomal subunit protein uS17 (87 aa).

Belongs to the universal ribosomal protein uS17 family. Part of the 30S ribosomal subunit.

In terms of biological role, one of the primary rRNA binding proteins, it binds specifically to the 5'-end of 16S ribosomal RNA. In Syntrophobacter fumaroxidans (strain DSM 10017 / MPOB), this protein is Small ribosomal subunit protein uS17.